A 591-amino-acid chain; its full sequence is L-fucose isomerase (591 aa).

Active-site proton acceptor residues include E337 and D361. E337, D361, and H528 together coordinate Mn(2+).

Belongs to the L-fucose isomerase family. Homohexamer. It depends on Mn(2+) as a cofactor.

It is found in the cytoplasm. It catalyses the reaction L-fucose = L-fuculose. The protein operates within carbohydrate degradation; L-fucose degradation; L-lactaldehyde and glycerone phosphate from L-fucose: step 1/3. In terms of biological role, converts the aldose L-fucose into the corresponding ketose L-fuculose. The protein is L-fucose isomerase of Escherichia coli O139:H28 (strain E24377A / ETEC).